A 468-amino-acid chain; its full sequence is Glutamate--tRNA ligase 2 (468 aa).

A 'HIGH' region motif is present at residues 13-23; the sequence is PSPTGYLHIGG. A 'KMSKS' region motif is present at residues 241-245; it reads KLSKR. Position 244 (lysine 244) interacts with ATP.

This sequence belongs to the class-I aminoacyl-tRNA synthetase family. Glutamate--tRNA ligase type 1 subfamily. In terms of assembly, monomer.

It localises to the cytoplasm. The catalysed reaction is tRNA(Glu) + L-glutamate + ATP = L-glutamyl-tRNA(Glu) + AMP + diphosphate. Functionally, catalyzes the attachment of glutamate to tRNA(Glu) in a two-step reaction: glutamate is first activated by ATP to form Glu-AMP and then transferred to the acceptor end of tRNA(Glu). This Paracoccus denitrificans (strain Pd 1222) protein is Glutamate--tRNA ligase 2.